Reading from the N-terminus, the 1238-residue chain is ATP-dependent helicase/nuclease subunit A (1238 aa).

A UvrD-like helicase ATP-binding domain is found at 12-490 (VSWTDDQWKA…IDLNANFRSR (479 aa)). 33–40 (AAAGSGKT) is a binding site for ATP. The region spanning 510–818 (GEILYDDNAS…RLVTIHSSKG (309 aa)) is the UvrD-like helicase C-terminal domain.

It belongs to the helicase family. AddA subfamily. In terms of assembly, heterodimer of AddA and AddB/RexB. Requires Mg(2+) as cofactor.

It catalyses the reaction Couples ATP hydrolysis with the unwinding of duplex DNA by translocating in the 3'-5' direction.. The catalysed reaction is ATP + H2O = ADP + phosphate + H(+). In terms of biological role, the heterodimer acts as both an ATP-dependent DNA helicase and an ATP-dependent, dual-direction single-stranded exonuclease. Recognizes the chi site generating a DNA molecule suitable for the initiation of homologous recombination. The AddA nuclease domain is required for chi fragment generation; this subunit has the helicase and 3' -&gt; 5' nuclease activities. This Lysinibacillus sphaericus (strain C3-41) protein is ATP-dependent helicase/nuclease subunit A.